We begin with the raw amino-acid sequence, 518 residues long: Glutamate--cysteine ligase (518 aa).

This sequence belongs to the glutamate--cysteine ligase type 1 family. Type 1 subfamily.

It catalyses the reaction L-cysteine + L-glutamate + ATP = gamma-L-glutamyl-L-cysteine + ADP + phosphate + H(+). It participates in sulfur metabolism; glutathione biosynthesis; glutathione from L-cysteine and L-glutamate: step 1/2. In Salmonella agona (strain SL483), this protein is Glutamate--cysteine ligase.